The following is a 360-amino-acid chain: Viral protein TPX (360 aa).

The tract at residues 269–289 (TVTPISSPSPTPTPTPTPTPT) is disordered. Residues 270–291 (VTPISSPSPTPTPTPTPTPTPT) form a Thr-Pro(N) repeat. The segment covering 275-289 (SPSPTPTPTPTPTPT) has biased composition (pro residues). A 3 Thr-Pro repeats regions and two near identical repeats region spans residues 278–353 (PTPTPTPTPT…PTPTPTPTPT (76 aa)). The segment at residues 292 to 301 (YDITYVVFDV) is a repeat. The Thr-Pro(N) repeat unit spans residues 302 to 322 (TPSPTPTPTLTSTPTPTPTPT). The stretch at residues 323-332 (YDITYVIFDV) is a repeat. The segment at 332–360 (VTPSPTPTPTPTPTPTPTPTPTSTTSSNI) is disordered. One copy of the Thr-Pro(N) repeat lies at 333 to 353 (TPSPTPTPTPTPTPTPTPTPT). Over residues 335 to 351 (SPTPTPTPTPTPTPTPT) the composition is skewed to pro residues.

This is Viral protein TPX from Thermoproteus tenax (TTV1).